A 748-amino-acid chain; its full sequence is Holliday junction recognition protein (748 aa).

Phosphoserine occurs at positions 123, 140, 185, 201, and 211. The tract at residues 191 to 226 (PGYCSRISRKSPGDPAKPASSPREWDPLHPSSTDMA) is disordered. Lys354 is covalently cross-linked (Glycyl lysine isopeptide (Lys-Gly) (interchain with G-Cter in SUMO2)). 3 positions are modified to phosphoserine: Ser412, Ser448, and Ser473. Ser486 carries the phosphoserine; by PKB/AKT1 modification. Ser496 carries the post-translational modification Phosphoserine. The tract at residues 512–574 (GRCLPKSDSS…PDKEVPGHGR (63 aa)) is disordered. Residues 524–562 (LPKTNPTHSATRPQQTSDLHVQGNSSGIFRKSVSPSKTL) show a composition bias toward polar residues. The segment covering 565-574 (PDKEVPGHGR) has biased composition (basic and acidic residues). Glycyl lysine isopeptide (Lys-Gly) (interchain with G-Cter in SUMO2) cross-links involve residues Lys581 and Lys586. A phosphoserine mark is found at Ser595 and Ser642. Positions 670 to 748 (RDGTRDHQFP…MLEKLETKSV (79 aa)) are disordered. Residues 688 to 699 (PQGSGRQGNSLG) show a composition bias toward polar residues. Residues 721–748 (SEERGENTSYRMEEKSDFMLEKLETKSV) are compositionally biased toward basic and acidic residues.

In terms of assembly, interacts with CENPA (via CATD domain); the interaction is direct and specific for CENPA since it does not interact with H3.1- or H3.3-containing nucleosomes. Heterotrimer composed of HJURP, CENPA and histone H4, where HJURP interacts with the dimer formed by CENPA and histone H4 and prevents tetramerization of CENPA and H4. Identified in a centromere complex containing histones H2A, H2B and H4, and at least CENPA, CENPB, CENPC, CENPT, CENPN, HJURP, SUPT16H, SSRP1 and RSF1. Interacts with 14-3-3 family members in a phosphorylation-dependent manner. Interacts with MSH5 and NBN. In terms of tissue distribution, according to PubMed:17256767, highly expressed in the thymus with lower levels in the placenta, small intestine, liver, skeletal muscle, and colon. According to PubMed:17823411, highly expressed in testis, and at a relatively lower level in thymus and bone marrow. Significantly overexpressed in many lung cancer samples, compared with normal lung.

It localises to the nucleus. It is found in the nucleolus. The protein localises to the chromosome. The protein resides in the centromere. In terms of biological role, centromeric protein that plays a central role in the incorporation and maintenance of histone H3-like variant CENPA at centromeres. Acts as a specific chaperone for CENPA and is required for the incorporation of newly synthesized CENPA molecules into nucleosomes at replicated centromeres. Prevents CENPA-H4 tetramerization and prevents premature DNA binding by the CENPA-H4 tetramer. Directly binds Holliday junctions. This chain is Holliday junction recognition protein (HJURP), found in Homo sapiens (Human).